The following is a 512-amino-acid chain: 2,3-bisphosphoglycerate-independent phosphoglycerate mutase (512 aa).

2 residues coordinate Mn(2+): Asp11 and Ser61. Ser61 acts as the Phosphoserine intermediate in catalysis. Substrate contacts are provided by residues His122, 152-153 (RD), Arg184, Arg190, 259-262 (RADR), and Lys332. Mn(2+) contacts are provided by Asp399, His403, Asp440, His441, and His459.

Belongs to the BPG-independent phosphoglycerate mutase family. Monomer. The cofactor is Mn(2+).

The enzyme catalyses (2R)-2-phosphoglycerate = (2R)-3-phosphoglycerate. The protein operates within carbohydrate degradation; glycolysis; pyruvate from D-glyceraldehyde 3-phosphate: step 3/5. In terms of biological role, catalyzes the interconversion of 2-phosphoglycerate and 3-phosphoglycerate. This Francisella tularensis subsp. tularensis (strain WY96-3418) protein is 2,3-bisphosphoglycerate-independent phosphoglycerate mutase.